We begin with the raw amino-acid sequence, 638 residues long: Phosphomethylpyrimidine synthase (638 aa).

Residues Asn243, Met272, Tyr301, His337, 357-359 (SRG), 398-401 (DGLR), and Glu437 contribute to the substrate site. His441 provides a ligand contact to Zn(2+). Residue Tyr464 coordinates substrate. Residue His505 participates in Zn(2+) binding. Positions 585, 588, and 593 each coordinate [4Fe-4S] cluster.

This sequence belongs to the ThiC family. In terms of assembly, homodimer. [4Fe-4S] cluster serves as cofactor.

The enzyme catalyses 5-amino-1-(5-phospho-beta-D-ribosyl)imidazole + S-adenosyl-L-methionine = 4-amino-2-methyl-5-(phosphooxymethyl)pyrimidine + CO + 5'-deoxyadenosine + formate + L-methionine + 3 H(+). It functions in the pathway cofactor biosynthesis; thiamine diphosphate biosynthesis. In terms of biological role, catalyzes the synthesis of the hydroxymethylpyrimidine phosphate (HMP-P) moiety of thiamine from aminoimidazole ribotide (AIR) in a radical S-adenosyl-L-methionine (SAM)-dependent reaction. The polypeptide is Phosphomethylpyrimidine synthase (Aromatoleum aromaticum (strain DSM 19018 / LMG 30748 / EbN1) (Azoarcus sp. (strain EbN1))).